A 324-amino-acid polypeptide reads, in one-letter code: Ribosomal RNA small subunit methyltransferase H (324 aa).

S-adenosyl-L-methionine-binding positions include 41–43 (GGH), Asp60, Tyr87, Asp111, and Gln118.

Belongs to the methyltransferase superfamily. RsmH family.

The protein resides in the cytoplasm. The enzyme catalyses cytidine(1402) in 16S rRNA + S-adenosyl-L-methionine = N(4)-methylcytidine(1402) in 16S rRNA + S-adenosyl-L-homocysteine + H(+). Functionally, specifically methylates the N4 position of cytidine in position 1402 (C1402) of 16S rRNA. This chain is Ribosomal RNA small subunit methyltransferase H, found in Nocardia farcinica (strain IFM 10152).